The primary structure comprises 261 residues: MNKLYWQTLGEGKTHLVLLHGWGLNAQVWQSIITRLSSHFTLHLVDLPGYGRSQGFPVLTLKEMADIVFSQAPEKKAIWLGWSLGGLVASRIALDNPNNVRALITVASSPCFAAHEAWPGIKPDVLKGFEQQLSDNFHRTVERFLALQTLGTQSAREDTKALKAVVLAQPLPSVETLNGGLEILRTEDLREQLTTLCCPFIRLYGYLDGLVPRKVAALLDARYPDSPSVIFRHAAHAPFISHPDEFSETLLKQCEALSILA.

The region spanning 15–243 is the AB hydrolase-1 domain; that stretch reads HLVLLHGWGL…AAHAPFISHP (229 aa). Substrate-binding positions include Trp22, 83-84, and 144-148; these read SL and FLALQ. The active-site Nucleophile is Ser83. Active-site residues include Asp208 and His236. His236 contacts substrate.

Belongs to the AB hydrolase superfamily. Carboxylesterase BioH family. Monomer.

It is found in the cytoplasm. The enzyme catalyses 6-carboxyhexanoyl-[ACP] methyl ester + H2O = 6-carboxyhexanoyl-[ACP] + methanol + H(+). It participates in cofactor biosynthesis; biotin biosynthesis. Functionally, the physiological role of BioH is to remove the methyl group introduced by BioC when the pimeloyl moiety is complete. It allows to synthesize pimeloyl-ACP via the fatty acid synthetic pathway through the hydrolysis of the ester bonds of pimeloyl-ACP esters. The sequence is that of Pimeloyl-[acyl-carrier protein] methyl ester esterase from Proteus mirabilis (strain HI4320).